An 855-amino-acid chain; its full sequence is Sucrose synthase 7 (855 aa).

The segment at 279 to 758 (SIFNIVIFSI…GLQRIYECYT (480 aa)) is GT-B glycosyltransferase.

It belongs to the glycosyltransferase 1 family. Plant sucrose synthase subfamily. As to expression, predominantly expressed in roots, flowers and immature seeds.

The protein localises to the cytoplasm. It is found in the membrane. It carries out the reaction an NDP-alpha-D-glucose + D-fructose = a ribonucleoside 5'-diphosphate + sucrose + H(+). Its function is as follows. Sucrose-cleaving enzyme that provides UDP-glucose and fructose for various metabolic pathways. This is Sucrose synthase 7 (SUS7) from Oryza sativa subsp. japonica (Rice).